Reading from the N-terminus, the 286-residue chain is Bifunctional protein FolD (286 aa).

Residues 167–169 (GRS) and I233 each bind NADP(+).

It belongs to the tetrahydrofolate dehydrogenase/cyclohydrolase family. As to quaternary structure, homodimer.

The enzyme catalyses (6R)-5,10-methylene-5,6,7,8-tetrahydrofolate + NADP(+) = (6R)-5,10-methenyltetrahydrofolate + NADPH. The catalysed reaction is (6R)-5,10-methenyltetrahydrofolate + H2O = (6R)-10-formyltetrahydrofolate + H(+). It participates in one-carbon metabolism; tetrahydrofolate interconversion. In terms of biological role, catalyzes the oxidation of 5,10-methylenetetrahydrofolate to 5,10-methenyltetrahydrofolate and then the hydrolysis of 5,10-methenyltetrahydrofolate to 10-formyltetrahydrofolate. This Limosilactobacillus reuteri (strain DSM 20016) (Lactobacillus reuteri) protein is Bifunctional protein FolD.